Consider the following 93-residue polypeptide: Protein 6 (93 aa).

Over residues 1-16 (MSSQQETNDKSNTQGH) the composition is skewed to polar residues. The disordered stretch occupies residues 1–52 (MSSQQETNDKSNTQGHPETDPEGKTGTDTGNTEDSPPDTDNVPITDDAIMDD).

It is found in the virion. The sequence is that of Protein 6 (6) from Rice yellow stunt virus (RYSV).